The primary structure comprises 761 residues: Translational repressor ifet-1 (761 aa).

Disordered regions lie at residues 101–274 (SPQR…SSGG), 386–446 (KGME…QHLH), 557–592 (VQRQ…AHNQ), 681–702 (QQAQ…QQHQ), and 730–761 (GSQF…AVPK). Basic and acidic residues-rich tracts occupy residues 114 to 128 (PTDD…ERLG), 164 to 189 (RGTR…EERL), and 212 to 222 (IELRGFDEPKK). 4 stretches are compositionally biased toward polar residues: residues 400–410 (QDPSQQAQLLQ), 557–568 (VQRQLQKSSSNA), 576–592 (SQSP…AHNQ), and 690–702 (ERQG…QQHQ).

As to quaternary structure, interacts with cgh-1. Interacts with ife-1 and oma-1. In the embryo, significantly enriched in the germ cell lineage.

The protein resides in the cytoplasm. Its function is as follows. Involved in translational repression of multiple mRNAs in the distal gonad. Recruited to the 3' untranslated region (UTR) of zif-1 by oma-1 and is required for translational repression of zif-1. May also be involved in translational repression of mei-1 through recruitment to the mei-1 3' UTR by oma-1. Required for oogenesis but not spermatogenesis, for P granule formation and for the localization of car-1 and cgh-1 to P granules. Required for normal spindle orientation in early embryos. The protein is Translational repressor ifet-1 of Caenorhabditis elegans.